Reading from the N-terminus, the 189-residue chain is GTPase HRas (189 aa).

The residue at position 1 (Met-1) is an N-acetylmethionine; in GTPase HRas; alternate. Thr-2 is subject to N-acetylthreonine; in GTPase HRas, N-terminally processed. GTP contacts are provided by residues 13–18 (GVGKSA), 29–35 (VDEYDPT), 59–60 (AG), 116–119 (NKCD), and 145–147 (SAK). Residues 32–40 (YDPTIEDSY) carry the Effector region motif. Residue Thr-35 is glycosylated ((Microbial infection) O-linked (Glc) threonine; by P.sordellii toxin TcsL). Cys-118 bears the S-nitrosocysteine mark. Residues 166-185 (HKLRKLNPPDESGPGCMSCK) are hypervariable region. Lys-170 is covalently cross-linked (Glycyl lysine isopeptide (Lys-Gly) (interchain with G-Cter in ubiquitin)). Cys-181 carries S-palmitoyl cysteine lipidation. Residue Cys-184 is the site of S-(15-deoxy-Delta12,14-prostaglandin J2-9-yl)cysteine; alternate attachment. The S-palmitoyl cysteine; alternate moiety is linked to residue Cys-184. A Cysteine methyl ester modification is found at Cys-186. A lipid anchor (S-farnesyl cysteine) is attached at Cys-186. A propeptide spans 187-189 (VLS) (removed in mature form).

It belongs to the small GTPase superfamily. Ras family. In its GTP-bound form interacts with PLCE1. Interacts with TBC1D10C. Interacts with RGL3. Interacts with HSPD1. Found in a complex with at least BRAF, HRAS, MAP2K1, MAPK3 and RGS14. Interacts (active GTP-bound form) with RGS14 (via RBD 1 domain). Forms a signaling complex with RASGRP1 and DGKZ. Interacts with RASSF5. Interacts with PDE6D. Interacts with IKZF3. Interacts with RACK1. Interacts with PIK3CG; the interaction is required for membrane recruitment and beta-gamma G protein dimer-dependent activation of the PI3K gamma complex PIK3CG:PIK3R6. Interacts with RAPGEF2. Interacts (active GTP-bound form) with both SHOC2 and PP1c (all isoforms) to form a tertiary complex; SHOC2 and PP1c preferably bind M-Ras/MRAS, but they also bind K-Ras/KRAS, N-Ras/NRAS and H-Ras/HRAS. Interacts (GTP-bound form) with MAPKAP1/SIN1; inhibiting H-Ras/HRAS activity. Post-translationally, palmitoylated by the ZDHHC9-GOLGA7 complex. A continuous cycle of de- and re-palmitoylation regulates rapid exchange between plasma membrane and Golgi. In terms of processing, S-nitrosylated; critical for redox regulation. Important for stimulating guanine nucleotide exchange. No structural perturbation on nitrosylation. The covalent modification of cysteine by 15-deoxy-Delta12,14-prostaglandin-J2 is autocatalytic and reversible. It may occur as an alternative to other cysteine modifications, such as S-nitrosylation and S-palmitoylation. Post-translationally, acetylation at Lys-104 prevents interaction with guanine nucleotide exchange factors (GEFs). In terms of processing, fatty-acylated at Lys-170. Ubiquitinated by the BCR(LZTR1) E3 ubiquitin ligase complex at Lys-170 in a non-degradative manner, leading to inhibit Ras signaling by decreasing Ras association with membranes. Post-translationally, (Microbial infection) Glucosylated at Thr-35 by P.sordellii toxin TcsL. Monoglucosylation completely prevents the recognition of the downstream effector, blocking the GTPases in their inactive form, leading to inhibit Ras signaling. In terms of tissue distribution, widely expressed.

It localises to the cell membrane. Its subcellular location is the golgi apparatus. It is found in the golgi apparatus membrane. The protein localises to the nucleus. The protein resides in the cytoplasm. It localises to the perinuclear region. The catalysed reaction is GTP + H2O = GDP + phosphate + H(+). Alternates between an inactive form bound to GDP and an active form bound to GTP. Activated by a guanine nucleotide-exchange factor (GEF) and inactivated by a GTPase-activating protein (GAP). Involved in the activation of Ras protein signal transduction. Ras proteins bind GDP/GTP and possess intrinsic GTPase activity. This Homo sapiens (Human) protein is GTPase HRas (HRAS).